A 351-amino-acid chain; its full sequence is Vacuolar protein sorting-associated protein 72 homolog (351 aa).

A disordered region spans residues M1–S136. Residues Q36–E72 show a composition bias toward acidic residues. Phosphoserine occurs at positions 56, 59, and 68. Basic and acidic residues predominate over residues A87–K100. A compositionally biased stretch (basic residues) spans L105–P121. Residues Q142–S202 adopt a coiled-coil conformation. A DNA-binding region spans residues K156–T208.

This sequence belongs to the VPS72/YL1 family. As to quaternary structure, interacts with H2AV. Component of the Tip60 chromatin-remodeling complex which contains the catalytic subunit Tip60 and the subunits Domino, Tra1, Brd8, E(Pc), DMAP1, Pontin, Reptin, Ing3, Act87E, BAP55, Mrg15, MrgBP, Gas41 and YL-1.

The protein resides in the nucleus. Part of the Tip60 chromatin-remodeling complex which is involved in DNA repair. Upon induction of DNA double-strand breaks, this complex acetylates phosphorylated H2AV in nucleosomes and exchanges it with unmodified H2AV. In Drosophila melanogaster (Fruit fly), this protein is Vacuolar protein sorting-associated protein 72 homolog (YL-1).